Here is a 344-residue protein sequence, read N- to C-terminus: MACSMLNGVDKLALISGKTPNRLRFSGSDFTGSYKLPRLNLPPNSRNLRAKTLTTVTKCTLSASERPASQPRFIQNKQEAFWFYRFLSIVYDNIINPGHWTEDMRDVALEPADLNNRNMLVVDVGGGTGFTTLGIIKHVDPKNVTILDQSPHQLAKAKAKKPLKECRIIEGDAEDLPFPTDYADRYVSAGSIEYWPDPQRGIREAYRVLKLGGKACLIGPVYPTFWLSRFFADVWMLFPKEEEYIEWFQKAGFKDVQLKRIGPKWYRGVRRHGLIMGCSVTGVKPASGDSPLQLGPKVEDVQKPVHPLVFLYRFLLGALASTYYVLVPIYMWIKDKIFPKGMPL.

The N-terminal 62 residues, 1–62 (MACSMLNGVD…LTTVTKCTLS (62 aa)), are a transit peptide targeting the chloroplast. Over 63–313 (ASERPASQPR…PVHPLVFLYR (251 aa)) the chain is Chloroplast intermembrane. Residues 121 to 130 (VVDVGGGTGF) are SAM motif I. The interval 166–179 (CRIIEGDAEDLPFP) is SAM motif II. The segment at 207–220 (RVLKLGGKACLIGP) is SAM motif III. Residues 314–334 (FLLGALASTYYVLVPIYMWIK) traverse the membrane as a helical segment. Residues 335–344 (DKIFPKGMPL) lie on the Stromal side of the membrane.

The protein belongs to the class I-like SAM-binding methyltransferase superfamily. MPBQ/MBSQ MT family.

It localises to the plastid. It is found in the chloroplast inner membrane. It catalyses the reaction 2-methyl-6-phytyl-1,4-benzene-1,4-diol + S-adenosyl-L-methionine = 2,3-dimethyl-6-phytylbenzene-1,4-diol + S-adenosyl-L-homocysteine + H(+). It carries out the reaction 2-methyl-6-(all-trans-nonaprenyl)benzene-1,4-diol + S-adenosyl-L-methionine = plastoquinol-9 + S-adenosyl-L-homocysteine + H(+). The enzyme catalyses 6-geranylgeranyl-2-methylbenzene-1,4-diol + S-adenosyl-L-methionine = 6-geranylgeranyl-2,3-dimethylbenzene-1,4-diol + S-adenosyl-L-homocysteine + H(+). It participates in cofactor biosynthesis; tocopherol biosynthesis. Involved in a key methylation step in both tocopherols (vitamin E) and plastoquinone synthesis. Catalyzes the conversion of 2-methyl-6-phytyl-1,4-hydroquinone (MPBQ) to 2,3-dimethyl-6-phytyl-1,4-hydroquinone (DMPQ, a substrate for tocopherol cyclase), and 2-methyl-6-solanyl-1,4-benzoquinone (MSBQ) to plastoquinone. This Spinacia oleracea (Spinach) protein is 2-methyl-6-phytyl-1,4-hydroquinone methyltransferase, chloroplastic.